The primary structure comprises 350 residues: Transcriptional activator hacA (350 aa).

The disordered stretch occupies residues 1–118 (MKSADRFSPV…RLEMEKLESE (118 aa)). Over residues 35-47 (PADTSLQTKNVVA) the composition is skewed to polar residues. Basic and acidic residues-rich tracts occupy residues 81–95 (KTED…ERVL) and 104–118 (SRER…LESE). Residues 87-150 (EQRRIERVLR…NRLSQQVAQL (64 aa)) form the bZIP domain. Positions 89 to 142 (RRIERVLRNRAAAQTSRERKRLEMEKLESEKIDMEQQNQFLLQRLAQMEAENNR) are basic motif. The tract at residues 143–150 (LSQQVAQL) is leucine-zipper. Disordered regions lie at residues 152 to 175 (AEVR…PTLT), 194 to 218 (PTPS…DLTQ), and 328 to 350 (SLQP…AGSA). Low complexity predominate over residues 160–175 (STPTSSSPASVSPTLT). Polar residues-rich tracts occupy residues 196 to 211 (PSVT…SSLA) and 329 to 340 (LQPSHGASTSRC).

It belongs to the bZIP family. Homodimer.

It is found in the nucleus. Its function is as follows. Transcriptional activator involved in the unfolded protein response (UPR) pathway. Recognizes and binds to the UPR element (UPRE) in the promoter of UPR-regulated genes. Increases the synthesis of endoplasmic reticulum-resident proteins required for protein folding as well as components of the secretory pathway. The chain is Transcriptional activator hacA (hacA) from Emericella nidulans (strain FGSC A4 / ATCC 38163 / CBS 112.46 / NRRL 194 / M139) (Aspergillus nidulans).